Reading from the N-terminus, the 64-residue chain is Large ribosomal subunit protein bL35 (64 aa).

The segment at 1–64 is disordered; that stretch reads MPKNKTNSGA…RKSIKKLLGK (64 aa).

It belongs to the bacterial ribosomal protein bL35 family.

This is Large ribosomal subunit protein bL35 from Beutenbergia cavernae (strain ATCC BAA-8 / DSM 12333 / CCUG 43141 / JCM 11478 / NBRC 16432 / NCIMB 13614 / HKI 0122).